Consider the following 144-residue polypeptide: Small ribosomal subunit protein eS12 (144 aa).

Belongs to the eukaryotic ribosomal protein eS12 family.

The polypeptide is Small ribosomal subunit protein eS12 (RPS12) (Trypanosoma brucei brucei).